We begin with the raw amino-acid sequence, 1638 residues long: ATP-dependent helicase brm (1638 aa).

Disordered regions lie at residues 1 to 137 and 201 to 387; these read MASP…SQEN and QMQQ…GMPM. The span at 7–51 shows a compositional bias: pro residues; it reads ANSPMPPPQAPSPMAPPSQSPAPSPHSPYPHQQPGPLQGPPPPGH. A compositionally biased stretch (low complexity) spans 52 to 63; the sequence is PGAYGHPMQHGP. Residues 121 to 131 show a composition bias toward pro residues; the sequence is GGPPGGPPPPE. One can recognise a QLQ domain in the interval 173–208; it reads HLNGNQVNLLRTQITAYRLLARNKPISMQMQQALQA. Over residues 201–211 the composition is skewed to low complexity; it reads QMQQALQAAQQ. Pro residues-rich tracts occupy residues 212–231, 238–253, 263–272, and 279–304; these read QPPPGPPIGPPGAPGGPPPG, PPVPPQQQQQPPPSAG, ASNPYGPPVP, and APPPPHMQQGQPLPPQPPQVGGPPPI. Low complexity-rich tracts occupy residues 305–317 and 365–382; these read QQQQPPQQQQQQS and PGSQVPQPGGGPQRQVPP. One can recognise an HSA domain in the interval 501–573; it reads QKLEAERKRR…EKERMRRLMA (73 aa). Positions 691 to 730 are disordered; it reads DEEDSCGSNDDHKPKVEEQPTATEDATDKAQATGNDEDAK. Residues S695 and S698 each carry the phosphoserine modification. Basic and acidic residues predominate over residues 699 to 708; that stretch reads NDDHKPKVEE. Polar residues predominate over residues 710-724; sequence PTATEDATDKAQATG. Residues 785–950 enclose the Helicase ATP-binding domain; the sequence is VSLYNNNLNG…WALLNFLLPS (166 aa). 798–805 is a binding site for ATP; it reads DEMGLGKT. The DEGH box signature appears at 900–903; the sequence is DEGH. A Helicase C-terminal domain is found at 1102 to 1263; it reads LLDRILPKLK…QKSTGSERQQ (162 aa). Positions 1380–1391 are enriched in acidic residues; that stretch reads DGAEFDEEEEED. The disordered stretch occupies residues 1380-1412; the sequence is DGAEFDEEEEEDDSKRKRRKRKNRKEESDDDSL. Phosphoserine occurs at positions 1407 and 1411. Residues 1425 to 1530 enclose the Bromo domain; sequence RSKKQMHKIM…KVFVGARQRI (106 aa). A disordered region spans residues 1544 to 1578; it reads NTGEAHGNGGSDNSDNDDDDGGDDGSDDEEIATTS. The segment covering 1557 to 1574 has biased composition (acidic residues); sequence SDNDDDDGGDDGSDDEEI. Phosphoserine is present on residues S1591 and S1594. Residues 1592 to 1604 show a composition bias toward low complexity; it reads LASAPATPTQSSS. Residues 1592–1638 are disordered; it reads LASAPATPTQSSSNVSSGAATTSKKQTRRKRSQKKYTISDDDDDDMD. The segment covering 1616-1625 has biased composition (basic residues); the sequence is KQTRRKRSQK.

In terms of assembly, component of the Brahma complex, which is composed of brm, osa, mor, Snr1/Bap45, dalao/Bap111, Bap55, Bap60 and Act42A/Bap47. Interacts with asf1. Associates with the brm-HDAC3-erm repressor complex, composed of brm, HDAC3 and erm. Interacts with erm and HDAC3.

Its subcellular location is the nucleus. It catalyses the reaction ATP + H2O = ADP + phosphate + H(+). Its function is as follows. Transcriptional regulator. Acts as a coactivator, assisting one or more dedicated transcriptional activators of ANTC and BXC homeotic gene clusters. Can counteract the repressive effect of Polycomb protein. ATPase subunit of the Brahma complex, a multiprotein complex which is the equivalent of the yeast SWI/SNF complex and acts by remodeling the chromatin by catalyzing an ATP-dependent alteration in the structure of nucleosomal DNA. This complex can both serve as a transcriptional coactivator or corepressor, depending on the context. In type II neuroblast lineage, as part of the Brm remodeling complex, suppresses the formation of ectopic neuroblasts probably through interaction with erm and HDAC3. The sequence is that of ATP-dependent helicase brm (brm) from Drosophila melanogaster (Fruit fly).